The following is a 466-amino-acid chain: Cysteine--tRNA ligase (466 aa).

Cys28 contributes to the Zn(2+) binding site. A 'HIGH' region motif is present at residues 30-40; it reads PTVYNYIHIGN. Residues Cys208, His233, and Glu237 each contribute to the Zn(2+) site. The 'KMSKS' region motif lies at 265–269; the sequence is KMSKS. ATP is bound at residue Lys268.

It belongs to the class-I aminoacyl-tRNA synthetase family. Monomer. Zn(2+) serves as cofactor.

It is found in the cytoplasm. It catalyses the reaction tRNA(Cys) + L-cysteine + ATP = L-cysteinyl-tRNA(Cys) + AMP + diphosphate. In Staphylococcus saprophyticus subsp. saprophyticus (strain ATCC 15305 / DSM 20229 / NCIMB 8711 / NCTC 7292 / S-41), this protein is Cysteine--tRNA ligase.